The sequence spans 1520 residues: Integrator complex subunit 3 homolog (1520 aa).

Disordered stretches follow at residues M1–T23, Q523–V671, V689–T801, D813–K922, F1116–N1177, and Q1489–E1520. Composition is skewed to low complexity over residues Q527 to P549 and Q557 to P595. The span at P596–Q612 shows a compositional bias: pro residues. Over residues Q613 to L625 the composition is skewed to low complexity. The segment covering N626–M639 has biased composition (polar residues). Low complexity-rich tracts occupy residues S642–S669, P694–L717, and Q725–Q735. The segment covering I736–S752 has biased composition (polar residues). A compositionally biased stretch (low complexity) spans S768–I789. The span at S819–I828 shows a compositional bias: polar residues. The span at P837–I882 shows a compositional bias: low complexity. The segment covering Q898–S918 has biased composition (pro residues). Composition is skewed to low complexity over residues F1116–N1130 and Q1137–N1177. The segment covering Q1489–H1504 has biased composition (polar residues).

This sequence belongs to the Integrator subunit 3 family. As to quaternary structure, component of the Integrator complex. The core complex associates with protein phosphatase 2A subunits, to form the Integrator-PP2A (INTAC) complex. Component of the SOSS complex.

Its subcellular location is the nucleus. It is found in the cytoplasm. Its function is as follows. Component of the integrator complex, a multiprotein complex that terminates RNA polymerase II (Pol II) transcription in the promoter-proximal region of genes. The integrator complex provides a quality checkpoint during transcription elongation by driving premature transcription termination of transcripts that are unfavorably configured for transcriptional elongation: the complex terminates transcription by (1) catalyzing dephosphorylation of the C-terminal domain (CTD) of Pol II subunit polr2a, (2) degrading the exiting nascent RNA transcript via endonuclease activity and (3) promoting the release of Pol II from bound DNA. The integrator complex is also involved in terminating the synthesis of non-coding Pol II transcripts, such as enhancer RNAs (eRNAs), small nuclear RNAs (snRNAs), telomerase RNAs and long non-coding RNAs (lncRNAs). Component of the SOSS complex, a multiprotein complex that functions downstream of the MRN complex to promote DNA repair and G2/M checkpoint. The SOSS complex associates with single-stranded DNA at DNA lesions and influences diverse endpoints in the cellular DNA damage response including cell-cycle checkpoint activation, recombinational repair and maintenance of genomic stability. The SOSS complex is required for efficient homologous recombination-dependent repair of double-strand breaks (DSBs) and ATM-dependent signaling pathways. In the SOSS complex, it is required for the assembly of the complex and for stabilization of the complex at DNA damage sites. The polypeptide is Integrator complex subunit 3 homolog (ints3) (Dictyostelium discoideum (Social amoeba)).